We begin with the raw amino-acid sequence, 109 residues long: Large ribosomal subunit protein uL22 (109 aa).

This sequence belongs to the universal ribosomal protein uL22 family. As to quaternary structure, part of the 50S ribosomal subunit.

This protein binds specifically to 23S rRNA; its binding is stimulated by other ribosomal proteins, e.g. L4, L17, and L20. It is important during the early stages of 50S assembly. It makes multiple contacts with different domains of the 23S rRNA in the assembled 50S subunit and ribosome. Functionally, the globular domain of the protein is located near the polypeptide exit tunnel on the outside of the subunit, while an extended beta-hairpin is found that lines the wall of the exit tunnel in the center of the 70S ribosome. In Cupriavidus necator (strain ATCC 17699 / DSM 428 / KCTC 22496 / NCIMB 10442 / H16 / Stanier 337) (Ralstonia eutropha), this protein is Large ribosomal subunit protein uL22.